The sequence spans 264 residues: Spermidine/putrescine transport system permease protein PotC (264 aa).

A run of 6 helical transmembrane segments spans residues 10 to 30 (FMTA…VNSF), 66 to 86 (MAVF…VALY), 109 to 129 (IVMA…LGFW), 131 to 151 (LLFS…YSRL), 176 to 196 (IILP…FTLS), and 232 to 252 (ALAT…QLIA). The ABC transmembrane type-1 domain maps to 60-248 (AQHSLTMAVF…VLSLVMVIAS (189 aa)).

Belongs to the binding-protein-dependent transport system permease family. CysTW subfamily.

It is found in the cell inner membrane. In terms of biological role, required for the activity of the bacterial periplasmic transport system of putrescine and spermidine. The sequence is that of Spermidine/putrescine transport system permease protein PotC (potC) from Shigella flexneri.